We begin with the raw amino-acid sequence, 415 residues long: Queuine tRNA-ribosyltransferase accessory subunit 2 (415 aa).

Zn(2+)-binding residues include cysteine 351, cysteine 353, cysteine 356, and histidine 382.

This sequence belongs to the queuine tRNA-ribosyltransferase family. QTRT2 subfamily. Heterodimer of a catalytic subunit QTRT1 and an accessory subunit QTRT2. Zn(2+) serves as cofactor.

It localises to the cytoplasm. Its subcellular location is the mitochondrion outer membrane. Its function is as follows. Non-catalytic subunit of the queuine tRNA-ribosyltransferase (TGT) that catalyzes the base-exchange of a guanine (G) residue with queuine (Q) at position 34 (anticodon wobble position) in tRNAs with GU(N) anticodons (tRNA-Asp, -Asn, -His and -Tyr), resulting in the hypermodified nucleoside queuosine (7-(((4,5-cis-dihydroxy-2-cyclopenten-1-yl)amino)methyl)-7-deazaguanosine). The polypeptide is Queuine tRNA-ribosyltransferase accessory subunit 2 (Homo sapiens (Human)).